The primary structure comprises 216 residues: Early E3 25 kDa glycoprotein (216 aa).

Asparagine 25, asparagine 82, asparagine 97, asparagine 109, asparagine 142, asparagine 147, and asparagine 160 each carry an N-linked (GlcNAc...) asparagine; by host glycan.

In Canis lupus familiaris (Dog), this protein is Early E3 25 kDa glycoprotein.